A 404-amino-acid polypeptide reads, in one-letter code: Argininosuccinate synthase (404 aa).

Residues 11–19 (AYSGGLDTS) and A38 each bind ATP. L-citrulline is bound by residues Y91 and S96. G121 serves as a coordination point for ATP. L-aspartate-binding residues include T123, N127, and D128. N127 is an L-citrulline binding site. L-citrulline-binding residues include R131, S181, S190, E266, and Y278.

This sequence belongs to the argininosuccinate synthase family. Type 1 subfamily. As to quaternary structure, homotetramer.

It localises to the cytoplasm. It catalyses the reaction L-citrulline + L-aspartate + ATP = 2-(N(omega)-L-arginino)succinate + AMP + diphosphate + H(+). It functions in the pathway amino-acid biosynthesis; L-arginine biosynthesis; L-arginine from L-ornithine and carbamoyl phosphate: step 2/3. This chain is Argininosuccinate synthase, found in Sulfurimonas denitrificans (strain ATCC 33889 / DSM 1251) (Thiomicrospira denitrificans (strain ATCC 33889 / DSM 1251)).